Here is a 354-residue protein sequence, read N- to C-terminus: 3-dehydroquinate synthase (354 aa).

NAD(+) contacts are provided by residues 100-104 (GATGD), 124-125 (TT), Lys-136, Lys-145, and 163-166 (FLKT). Residues Glu-178, His-242, and His-256 each coordinate Zn(2+).

This sequence belongs to the sugar phosphate cyclases superfamily. Dehydroquinate synthase family. NAD(+) serves as cofactor. The cofactor is Co(2+). Zn(2+) is required as a cofactor.

The protein resides in the cytoplasm. The catalysed reaction is 7-phospho-2-dehydro-3-deoxy-D-arabino-heptonate = 3-dehydroquinate + phosphate. It participates in metabolic intermediate biosynthesis; chorismate biosynthesis; chorismate from D-erythrose 4-phosphate and phosphoenolpyruvate: step 2/7. Catalyzes the conversion of 3-deoxy-D-arabino-heptulosonate 7-phosphate (DAHP) to dehydroquinate (DHQ). This Staphylococcus aureus (strain MSSA476) protein is 3-dehydroquinate synthase.